The following is a 494-amino-acid chain: Transcription factor SOX-9 (494 aa).

2 disordered regions span residues 1 to 66 and 159 to 275; these read MNLL…ESDE and ERLR…FRDV. The segment covering 27 to 42 has biased composition (low complexity); that stretch reads SDDSAGSPCPSGSGSD. Composition is skewed to basic and acidic residues over residues 56–66 and 159–174; these read GDPDLKKESDE and ERLR…DYKY. Residues 63 to 103 form a dimerization (DIM) region; that stretch reads ESDEDKFPVCIREAVSQVLKGYDWTLVPMPVRVNGSSKNKP. The PQA stretch occupies residues 63–103; it reads ESDEDKFPVCIREAVSQVLKGYDWTLVPMPVRVNGSSKNKP. At S64 the chain carries Phosphoserine. The segment at residues 105–173 is a DNA-binding region (HMG box); it reads VKRPMNAFMV…QHKKDHPDYK (69 aa). S181 is subject to Phosphoserine. Low complexity predominate over residues 211–222; that stretch reads SPQSSSSISEVH. Residues 224–309 form a transactivation domain (TAM) region; it reads PGEHSGQSQG…LPPNGHPGVP (86 aa). 2 short sequence motifs (9aaTAD) span residues 277-286 and 292-300; these read IGELSSDVIS and DVNEFDQYL. Over residues 326–337 the composition is skewed to low complexity; sequence SSASSPAGAGHA. A disordered region spans residues 326-402; that stretch reads SSASSPAGAG…PQQQQQQQQQ (77 aa). Over residues 344–353 the composition is skewed to pro residues; that stretch reads PQPPQPPAQP. The transactivation domain (TAC) stretch occupies residues 372 to 494; the sequence is RPHIKTEQLS…QPVYTQLTRP (123 aa). K376 is covalently cross-linked (Glycyl lysine isopeptide (Lys-Gly) (interchain with G-Cter in SUMO)). Polar residues predominate over residues 378 to 387; it reads EQLSPSHYSE. Residues 388 to 402 are compositionally biased toward low complexity; it reads QQQHSPQQQQQQQQQ. The 9aaTAD 3 motif lies at 445–453; it reads GGLYSTFTY. A disordered region spans residues 462-494; that stretch reads YTPIADTSGVPSIPQTHSPQHWEQPVYTQLTRP. Residues 470–494 show a composition bias toward polar residues; that stretch reads GVPSIPQTHSPQHWEQPVYTQLTRP.

As to quaternary structure, interacts with SNAI2; triggers neural crest delamination in a phosphorylation dependent manner. Interacts with UBE2I. Phosphorylated at Ser-181 in the developing neural tube. Phosphorylation at either Ser-64 or Ser-181 is required for sumoylation, but phosphorylation is not dependent on sumoylation. Sumoylation is enhanced by PKA. Phosphorylation is required for interaction with SNAI2 to trigger neural crest delamination and for an efficient trunk neural crest delamination, whereas sumoylation plays a less significant role. Phosphorylation and sumoylation are induced by BMP signaling pathway. Post-translationally, sumoylated at Lys-376; phosphorylation at either Ser-64 or Ser-181 is required for sumoylation. Sumoylation is induced by BMP signaling pathway.

The protein resides in the nucleus. Functionally, transcription factor that plays a key role in chondrocytes differentiation and skeletal development. Specifically binds the 5'-ACAAAG-3' DNA motif present in enhancers and super-enhancers and promotes expression of genes important for chondrogenesis, including COL2A1. Plays a central role in successive steps of chondrocyte differentiation. Absolutely required for precartilaginous condensation, the first step in chondrogenesis during which skeletal progenitors differentiate into prechondrocytes. Together with SOX5 and SOX6, required for overt chondrogenesis when condensed prechondrocytes differentiate into early stage chondrocytes, the second step in chondrogenesis. Later, required to direct hypertrophic maturation and block osteoblast differentiation of growth plate chondrocytes: maintains chondrocyte columnar proliferation, delays prehypertrophy and then prevents osteoblastic differentiation of chondrocytes. Also required for chondrocyte hypertrophy, both indirectly, by keeping the lineage fate of chondrocytes, and directly, by remaining present in upper hypertrophic cells. Low lipid levels are the main nutritional determinant for chondrogenic commitment of skeletal progenitor cells: when lipids levels are low, FOXO transcription factors promote expression of SOX9, which induces chondrogenic commitment and suppresses fatty acid oxidation. In addition to cartilage development, also acts as a regulator of proliferation and differentiation in epithelial stem/progenitor cells. In response to bone morphogenetic protein stimulus, phosphorylation is induced and then sumoylation, allowing cooperation with SNAI2 to trigger neural crest delamination. This is Transcription factor SOX-9 from Gallus gallus (Chicken).